A 45-amino-acid chain; its full sequence is Photosystem II reaction center protein K (45 aa).

The propeptide occupies 1 to 8 (MNSALFLA). A helical transmembrane segment spans residues 23–43 (ILPVIPVFFLLLAFVWQAAIG).

It belongs to the PsbK family. PSII is composed of 1 copy each of membrane proteins PsbA, PsbB, PsbC, PsbD, PsbE, PsbF, PsbH, PsbI, PsbJ, PsbK, PsbL, PsbM, PsbT, PsbX, PsbY, PsbZ, Psb30/Ycf12, at least 3 peripheral proteins of the oxygen-evolving complex and a large number of cofactors. It forms dimeric complexes.

It is found in the plastid. The protein localises to the chloroplast thylakoid membrane. One of the components of the core complex of photosystem II (PSII). PSII is a light-driven water:plastoquinone oxidoreductase that uses light energy to abstract electrons from H(2)O, generating O(2) and a proton gradient subsequently used for ATP formation. It consists of a core antenna complex that captures photons, and an electron transfer chain that converts photonic excitation into a charge separation. The polypeptide is Photosystem II reaction center protein K (Pyropia yezoensis (Susabi-nori)).